A 449-amino-acid chain; its full sequence is CCAAT/enhancer-binding protein (449 aa).

3 disordered regions span residues 211–233, 276–302, and 334–386; these read HATY…TIKE, GNPL…NGSQ, and SKLH…KAKV. Composition is skewed to low complexity over residues 215-229, 280-301, and 339-349; these read NNSS…SDSS, NGGN…SNGS, and QQQHQQHQQQQ. Over residues 357 to 368 the composition is skewed to basic and acidic residues; that stretch reads KHVDKGTDEYRR. In terms of domain architecture, bZIP spans 363-426; that stretch reads TDEYRRRRER…QLHKQIYMQL (64 aa). The basic motif stretch occupies residues 367 to 396; it reads RRRRERNNIAVRKSREKAKVRSREVEERVK. The segment at 398–405 is leucine-zipper; it reads LLKEKDAL.

This sequence belongs to the bZIP family. C/EBP subfamily. In terms of assembly, binds DNA as a dimer and can form stable heterodimers. Interacts with trbl. In terms of processing, ubiquitination/deubiquitination regulates border cell migration. Ubiquitination is stimulated by trbl, which leads to proteasomal degradation and inhibits border cell migration. Deubiquitination by Usp47, leads to its stabilization and promotes border cell migration.

The protein resides in the nucleus. Functionally, required for the expression of gene products mediating border cell migration. Among the DNA sequences that this protein binds with high affinity is a conserved site within the promoter of its gene. This is CCAAT/enhancer-binding protein (slbo) from Drosophila melanogaster (Fruit fly).